A 430-amino-acid polypeptide reads, in one-letter code: Glutamate-1-semialdehyde 2,1-aminomutase (430 aa).

An N6-(pyridoxal phosphate)lysine modification is found at K267.

It belongs to the class-III pyridoxal-phosphate-dependent aminotransferase family. HemL subfamily. In terms of assembly, homodimer. Requires pyridoxal 5'-phosphate as cofactor.

It localises to the cytoplasm. It carries out the reaction (S)-4-amino-5-oxopentanoate = 5-aminolevulinate. It participates in porphyrin-containing compound metabolism; protoporphyrin-IX biosynthesis; 5-aminolevulinate from L-glutamyl-tRNA(Glu): step 2/2. This chain is Glutamate-1-semialdehyde 2,1-aminomutase, found in Anaeromyxobacter dehalogenans (strain 2CP-1 / ATCC BAA-258).